The sequence spans 882 residues: Translation initiation factor IF-2 (882 aa).

Disordered stretches follow at residues 67–202 (KTVS…EKAR) and 223–278 (ERYG…KHMK). 2 stretches are compositionally biased toward basic and acidic residues: residues 95–152 (VKRD…EAKA) and 161–202 (EQPK…EKAR). Over residues 251–264 (GRRNRNKTQTKSKR) the composition is skewed to basic residues. Basic and acidic residues predominate over residues 265-274 (GGKDAREGRE). The tr-type G domain maps to 382-551 (PRAPVVTIMG…LLQAEVLELK (170 aa)). The G1 stretch occupies residues 391 to 398 (GHVDHGKT). 391-398 (GHVDHGKT) serves as a coordination point for GTP. A G2 region spans residues 416 to 420 (GITQH). Residues 437-440 (DTPG) are G3. GTP-binding positions include 437–441 (DTPGH) and 491–494 (NKMD). The segment at 491 to 494 (NKMD) is G4. The interval 527 to 529 (SAK) is G5.

The protein belongs to the TRAFAC class translation factor GTPase superfamily. Classic translation factor GTPase family. IF-2 subfamily.

It is found in the cytoplasm. In terms of biological role, one of the essential components for the initiation of protein synthesis. Protects formylmethionyl-tRNA from spontaneous hydrolysis and promotes its binding to the 30S ribosomal subunits. Also involved in the hydrolysis of GTP during the formation of the 70S ribosomal complex. The chain is Translation initiation factor IF-2 from Shewanella amazonensis (strain ATCC BAA-1098 / SB2B).